Reading from the N-terminus, the 218-residue chain is uncharacterized protein (218 aa).

Disordered regions lie at residues 30–71 (FSHR…RSPP), 93–120 (SGRG…PRPD), and 133–209 (MEVE…PGFP). Positions 43–71 (PGAPAVVPAPVSAPRPASSPARSESRSPP) are enriched in low complexity. The segment covering 94–110 (GRGGGGGGGGGARTGGG) has biased composition (gly residues). Positions 138–148 (PPHPPPQPQVC) are enriched in pro residues. The span at 156–171 (PGHGRAGLPEGKGPGG) shows a compositional bias: gly residues. A compositionally biased stretch (low complexity) spans 191–209 (RAPSPAAPRRGRLPAPGFP).

This is an uncharacterized protein from Homo sapiens (Human).